We begin with the raw amino-acid sequence, 224 residues long: Cytidylate kinase (224 aa).

11–19 (GPAAAGKST) contributes to the ATP binding site.

This sequence belongs to the cytidylate kinase family. Type 1 subfamily.

The protein localises to the cytoplasm. The catalysed reaction is CMP + ATP = CDP + ADP. The enzyme catalyses dCMP + ATP = dCDP + ADP. This Geobacillus kaustophilus (strain HTA426) protein is Cytidylate kinase.